The sequence spans 61 residues: Small ribosomal subunit protein uS14 (61 aa).

Zn(2+)-binding residues include C24, C27, C40, and C43.

It belongs to the universal ribosomal protein uS14 family. Zinc-binding uS14 subfamily. Part of the 30S ribosomal subunit. Contacts proteins S3 and S10. Zn(2+) serves as cofactor.

Its function is as follows. Binds 16S rRNA, required for the assembly of 30S particles and may also be responsible for determining the conformation of the 16S rRNA at the A site. In Bacillus anthracis (strain A0248), this protein is Small ribosomal subunit protein uS14.